A 164-amino-acid chain; its full sequence is MDGYVSHYTNKLDAKGRVSIPAPFRAVLVRDGFDGLYVHPSIDQEALDCGGHALLREIDGLLSGLSPYSEERDLFSTALIGTSEILKVDSEGRTILTETLKSYAGITGEVTFVGHGHKFQIWEPGRFRAHLEEARNRVRDLRRQLSARHAAPDAPPLRSHGARE.

SpoVT-AbrB domains lie at 7–60 (HYTN…EIDG) and 83–126 (SEIL…EPGR). The tract at residues 144 to 164 (QLSARHAAPDAPPLRSHGARE) is disordered.

This sequence belongs to the MraZ family. As to quaternary structure, forms oligomers.

The protein resides in the cytoplasm. The protein localises to the nucleoid. The polypeptide is Transcriptional regulator MraZ (Methylocella silvestris (strain DSM 15510 / CIP 108128 / LMG 27833 / NCIMB 13906 / BL2)).